The sequence spans 321 residues: uncharacterized protein (321 aa).

The next 9 helical transmembrane spans lie at 12–32, 52–72, 86–106, 109–129, 136–156, 168–188, 214–234, 254–274, and 292–312; these read IGVE…WAAT, LITS…AFLV, ILMS…ILII, LTGL…QQWF, FVIS…LVLA, DSLS…LFVG, WGMI…FTFL, KEIP…GLFF, and IFIC…QIFA.

It is found in the cell membrane. This is an uncharacterized protein from Campylobacter jejuni subsp. jejuni serotype O:2 (strain ATCC 700819 / NCTC 11168).